The chain runs to 52 residues: UPF0057 membrane protein At1g57550 (52 aa).

A run of 2 helical transmembrane segments spans residues 4–24 and 30–50; these read FLEV…RYGL and VCLL…IYVL.

Belongs to the UPF0057 (PMP3) family.

The protein localises to the membrane. The polypeptide is UPF0057 membrane protein At1g57550 (Arabidopsis thaliana (Mouse-ear cress)).